Consider the following 283-residue polypeptide: Phosphatidylglycerol--prolipoprotein diacylglyceryl transferase (283 aa).

Helical transmembrane passes span 18 to 38 (LFGHPIVWYGLLFALGLIILG), 59 to 79 (LAVYVFVGTIVGARLGHVLFY), 91 to 111 (IFVTWEGGLASHGGTIGIIIA), 124 to 144 (ILWVLDRLAVPTGIVAAMIRL), 185 to 205 (TQIYEALCYLAVFALCMWLYW), 213 to 233 (YSGLIVGVFLTGIFLSRFIIE), and 251 to 271 (GLNMGQLLSIPFVLAGIWLII). Position 143 (arginine 143) interacts with a 1,2-diacyl-sn-glycero-3-phospho-(1'-sn-glycerol).

It belongs to the Lgt family.

Its subcellular location is the cell inner membrane. The enzyme catalyses L-cysteinyl-[prolipoprotein] + a 1,2-diacyl-sn-glycero-3-phospho-(1'-sn-glycerol) = an S-1,2-diacyl-sn-glyceryl-L-cysteinyl-[prolipoprotein] + sn-glycerol 1-phosphate + H(+). The protein operates within protein modification; lipoprotein biosynthesis (diacylglyceryl transfer). In terms of biological role, catalyzes the transfer of the diacylglyceryl group from phosphatidylglycerol to the sulfhydryl group of the N-terminal cysteine of a prolipoprotein, the first step in the formation of mature lipoproteins. This Porphyromonas gingivalis (strain ATCC 33277 / DSM 20709 / CIP 103683 / JCM 12257 / NCTC 11834 / 2561) protein is Phosphatidylglycerol--prolipoprotein diacylglyceryl transferase.